The following is a 303-amino-acid chain: D-alanine--D-alanine ligase (303 aa).

The 197-residue stretch at 104-300 (KLMWQAVGLP…FEKLVERVLE (197 aa)) folds into the ATP-grasp domain. ATP is bound at residue 132–187 (IAKLGLPVFVKPSSEGSSVGVTKVKTVEQLLPAVEEALKFDSIVLVEAFLAGKEYS). Residues aspartate 254, glutamate 267, and asparagine 269 each contribute to the Mg(2+) site.

It belongs to the D-alanine--D-alanine ligase family. Requires Mg(2+) as cofactor. The cofactor is Mn(2+).

The protein localises to the cytoplasm. The catalysed reaction is 2 D-alanine + ATP = D-alanyl-D-alanine + ADP + phosphate + H(+). It functions in the pathway cell wall biogenesis; peptidoglycan biosynthesis. Cell wall formation. The polypeptide is D-alanine--D-alanine ligase (Actinobacillus pleuropneumoniae serotype 5b (strain L20)).